A 124-amino-acid polypeptide reads, in one-letter code: MRHRVKTKSFHRPKEQREALFVNLAIALIEHGKIETTVQKAKALRPFVEKLVTLAKKETVAARRLLNARLRNNTKAATKLFKEIAPLLKERNGGYTRIYKLDKRRRGDDAQMAIIEFVEHPDKE.

The protein belongs to the bacterial ribosomal protein bL17 family. Part of the 50S ribosomal subunit. Contacts protein L32.

In Persephonella marina (strain DSM 14350 / EX-H1), this protein is Large ribosomal subunit protein bL17.